Reading from the N-terminus, the 269-residue chain is GRF-interacting factor 10 (269 aa).

Positions 1–71 are disordered; it reads MTAEGEAKNP…GEKDDGACRD (71 aa). The span at 22–43 shows a compositional bias: low complexity; that stretch reads QQAAPAPAPAQGEVAQEAAVQG. Over residues 47–69 the composition is skewed to basic and acidic residues; sequence EQERDKADREVQGGAGEKDDGAC. Residues 113–148 enclose the QLQ domain; sequence AFTAMQLQELEQQSRVYQYMAARVPVPTHLVFPVWK. In terms of domain architecture, WRC spans 179-223; the sequence is EPEPGRCRRTDGKKWRCWRNTIPNEKYCERHMHRGRKRPVQVFLE. Short sequence motifs (bipartite nuclear localization signal) lie at residues 184 to 194 and 212 to 216; these read RCRRTDGKKWR and RGRKR. Positions 217–269 are disordered; the sequence is PVQVFLEDDEPDSASGSKPAAPGKATEGAKKADDKSPSSKKLAVAAPAAVQST. The span at 243-253 shows a compositional bias: basic and acidic residues; that stretch reads EGAKKADDKSP.

The protein belongs to the GRF family. In terms of assembly, interacts with GIF1. Highly expressed in shoots. Expressed in developing leaves.

The protein resides in the nucleus. In terms of biological role, involved in the regulation of cell proliferation in developing shoots and leaves. Does not possess transactivation activity. The protein is GRF-interacting factor 10 of Zea mays (Maize).